A 936-amino-acid chain; its full sequence is UPF0746 protein DDB_G0280787 (936 aa).

A compositionally biased stretch (basic and acidic residues) spans 1 to 19; sequence MISNKRKEIDTIDGHHEKD. The disordered stretch occupies residues 1-30; it reads MISNKRKEIDTIDGHHEKDNDDDDSDGIDN. The SAP domain occupies 44–78; sequence SGSTNYRELQIIAKSLGLASNGKKQLVYNRIEGYF. The disordered stretch occupies residues 91–110; the sequence is ETNQQEEKKEEEQQQPQPQE.

This sequence belongs to the UPF0746 family.

This Dictyostelium discoideum (Social amoeba) protein is UPF0746 protein DDB_G0280787.